A 353-amino-acid polypeptide reads, in one-letter code: Heterogeneous nuclear ribonucleoproteins A2/B1 (353 aa).

Met1 is subject to N-acetylmethionine. The residue at position 4 (Thr4) is a Phosphothreonine. Residue Leu5 forms a Glycyl lysine isopeptide (Lys-Gly) (interchain with G-Cter in SUMO2) linkage. Residues 9–15 (PLERKKR) carry the Nuclear localization signal motif. 2 consecutive RRM domains span residues 21–104 (RKLF…ESGK) and 112–191 (KKLF…LSRQ). Residue Lys22 forms a Glycyl lysine isopeptide (Lys-Gly) (interchain with G-Cter in SUMO2) linkage. The residue at position 29 (Ser29) is a Phosphoserine. Position 38 is an omega-N-methylarginine (Arg38). Ser85 bears the Phosphoserine mark. An N6,N6-dimethyllysine; alternate modification is found at Lys104. Residue Lys104 forms a Glycyl lysine isopeptide (Lys-Gly) (interchain with G-Cter in SUMO2); alternate linkage. Glycyl lysine isopeptide (Lys-Gly) (interchain with G-Cter in SUMO2) cross-links involve residues Lys112, Lys120, and Lys137. Thr140 is modified (phosphothreonine). The residue at position 149 (Ser149) is a Phosphoserine. A Glycyl lysine isopeptide (Lys-Gly) (interchain with G-Cter in SUMO2) cross-link involves residue Lys152. A Phosphothreonine modification is found at Thr159. Glycyl lysine isopeptide (Lys-Gly) (interchain with G-Cter in SUMO2); alternate cross-links involve residues Lys168 and Lys173. 2 positions are modified to N6-acetyllysine; alternate: Lys168 and Lys173. Position 176 is a phosphothreonine (Thr176). Lys186 participates in a covalent cross-link: Glycyl lysine isopeptide (Lys-Gly) (interchain with G-Cter in SUMO2). Phosphoserine occurs at positions 189 and 201. A disordered region spans residues 193–353 (MQEVQSSRSG…SGGYGGRSRY (161 aa)). Gly residues predominate over residues 202 to 223 (GRGGNFGFGDSRGGGGNFGPGP). An Asymmetric dimethylarginine; alternate modification is found at Arg203. Arg203 carries the dimethylated arginine; alternate modification. Arg203 carries the omega-N-methylarginine; alternate modification. A Phosphoserine modification is found at Ser212. Arg213 carries the asymmetric dimethylarginine; alternate modification. Arg213 carries the post-translational modification Dimethylated arginine; alternate. Arg213 is subject to Omega-N-methylarginine; alternate. Ser225 carries the phosphoserine modification. At Arg228 the chain carries Omega-N-methylarginine. Ser231 and Ser236 each carry phosphoserine. Omega-N-methylarginine is present on Arg238. Ser259 bears the Phosphoserine mark. At Arg266 the chain carries Asymmetric dimethylarginine; alternate. An Omega-N-methylarginine; alternate modification is found at Arg266. The tract at residues 308-347 (QQPSNYGPMKSGNFGGSRNMGGPYGGGNYGPGGSGGSGGY) is nuclear targeting sequence. Residues 320–353 (NFGGSRNMGGPYGGGNYGPGGSGGSGGYGGRSRY) are compositionally biased toward gly residues. Ser324 bears the Phosphoserine mark. An Omega-N-methylarginine modification is found at Arg325. Position 331 is a phosphotyrosine (Tyr331). Phosphoserine occurs at positions 341 and 344. At Tyr347 the chain carries Phosphotyrosine. Arg350 bears the Omega-N-methylarginine mark.

As to quaternary structure, homodimer; dimerization is required for nucleocytoplasmic translocation. Identified in the spliceosome C complex. Identified in a IGF2BP1-dependent mRNP granule complex containing untranslated mRNAs. Interacts with IGF2BP1. Interacts with C9orf72. Interacts with DGCR8. Interacts with TARDBP. Interacts with CKAP5. Interacts with TBK1. Interacts with STING1. Interacts with SRC. Interacts with PPIA/CYPA. Interacts (via C-terminus) with FAM76B; the interaction results in retention of HNRNPA2B1 in the nucleus and inhibition of the NF-kappa-B-mediated inflammatory pathway. Interacts with NF-kappa-B inhibitors NFKBIA and NFKBIE; the interaction may be mediated by the RRM2 domain of HNRNPA2B1, and HNRNPA2B1 may interact simultaneously with FAM76B and either NFKBIA or NFKBIE to form a complex. Post-translationally, sumoylated in exosomes, promoting miRNAs-binding. Asymmetric dimethylation at Arg-266 constitutes the major methylation site. According to a report, methylation affects subcellular location and promotes nuclear localization. According to another report, methylation at Arg-266 does not influence nucleocytoplasmic shuttling.

The protein localises to the nucleus. The protein resides in the nucleoplasm. Its subcellular location is the cytoplasm. It is found in the cytoplasmic granule. It localises to the secreted. The protein localises to the extracellular exosome. Heterogeneous nuclear ribonucleoprotein (hnRNP) that associates with nascent pre-mRNAs, packaging them into hnRNP particles. The hnRNP particle arrangement on nascent hnRNA is non-random and sequence-dependent and serves to condense and stabilize the transcripts and minimize tangling and knotting. Packaging plays a role in various processes such as transcription, pre-mRNA processing, RNA nuclear export, subcellular location, mRNA translation and stability of mature mRNAs. Forms hnRNP particles with at least 20 other different hnRNP and heterogeneous nuclear RNA in the nucleus. Involved in transport of specific mRNAs to the cytoplasm in oligodendrocytes and neurons: acts by specifically recognizing and binding the A2RE (21 nucleotide hnRNP A2 response element) or the A2RE11 (derivative 11 nucleotide oligonucleotide) sequence motifs present on some mRNAs, and promotes their transport to the cytoplasm. Specifically binds single-stranded telomeric DNA sequences, protecting telomeric DNA repeat against endonuclease digestion. Also binds other RNA molecules, such as primary miRNA (pri-miRNAs): acts as a nuclear 'reader' of the N6-methyladenosine (m6A) mark by specifically recognizing and binding a subset of nuclear m6A-containing pri-miRNAs. Binding to m6A-containing pri-miRNAs promotes pri-miRNA processing by enhancing binding of DGCR8 to pri-miRNA transcripts. Involved in miRNA sorting into exosomes following sumoylation, possibly by binding (m6A)-containing pre-miRNAs. Acts as a regulator of efficiency of mRNA splicing, possibly by binding to m6A-containing pre-mRNAs. Plays a role in the splicing of pyruvate kinase PKM by binding repressively to sequences flanking PKM exon 9, inhibiting exon 9 inclusion and resulting in exon 10 inclusion and production of the PKM M2 isoform. Also plays a role in the activation of the innate immune response. Mechanistically, senses the presence of viral DNA in the nucleus, homodimerizes and is demethylated by JMJD6. In turn, translocates to the cytoplasm where it activates the TBK1-IRF3 pathway, leading to interferon alpha/beta production. In terms of biological role, (Microbial infection) Involved in the transport of HIV-1 genomic RNA out of the nucleus, to the microtubule organizing center (MTOC), and then from the MTOC to the cytoplasm: acts by specifically recognizing and binding the A2RE (21 nucleotide hnRNP A2 response element) sequence motifs present on HIV-1 genomic RNA, and promotes its transport. In Homo sapiens (Human), this protein is Heterogeneous nuclear ribonucleoproteins A2/B1 (HNRNPA2B1).